The following is a 437-amino-acid chain: F-box only protein 9 (437 aa).

Residues 1–29 form a disordered region; sequence MAEAEEDCHSEAVREGDDDDENESPAETD. Residues 16-26 are compositionally biased toward acidic residues; that stretch reads GDDDDENESPA. Residues 84-117 form a TPR repeat; it reads ARELFLKAVEEEQNGALYEAIKFYRRAMQLVPDI. A Phosphoserine modification is found at Ser-126. In terms of domain architecture, F-box spans 175–226; the sequence is QTHISALPMEVLMYVFRWVVSSDLDLRSLEQLSQVCRGFYICARDPEIWRLA.

As to quaternary structure, part of the SCF (SKP1-CUL1-F-box) E3 ubiquitin-protein ligase complex SCF(FBXO9) composed of CUL1, SKP1, RBX1 and FBXO9. Interacts with TTI1 and TELO2; when TTI1 and TELO2 are phosphorylated by CK2.

It is found in the cytoplasm. It participates in protein modification; protein ubiquitination. Its function is as follows. Substrate recognition component of a SCF (SKP1-CUL1-F-box protein) E3 ubiquitin-protein ligase complex which mediates the ubiquitination and subsequent proteasomal degradation of target proteins and plays a role in several biological processes such as cell cycle, cell proliferation, or maintenance of chromosome stability. Ubiquitinates mTORC1-bound TTI1 and TELO2 when they are phosphorylated by CK2 following growth factor deprivation, leading to their degradation. In contrast, does not mediate ubiquitination of TTI1 and TELO2 when they are part of the mTORC2 complex. As a consequence, mTORC1 is inactivated to restrain cell growth and protein translation, while mTORC2 is the activated due to the relief of feedback inhibition by mTORC1. Plays a role in maintaining epithelial cell survival by regulating the turn-over of chromatin modulator PRMT4 through ubiquitination and degradation by the proteasomal pathway. Also regulates PPARgamma stability by facilitating PPARgamma/PPARG ubiquitination and thereby plays a role in adipocyte differentiation. The protein is F-box only protein 9 (FBXO9) of Bos taurus (Bovine).